A 255-amino-acid polypeptide reads, in one-letter code: Electron transfer flavoprotein beta subunit lysine methyltransferase (255 aa).

The transit peptide at Met-1 to Val-32 directs the protein to the mitochondrion.

This sequence belongs to the methyltransferase superfamily. ETFBKMT family. In terms of assembly, interacts with HSPD1; this protein may possibly be a methylation substrate.

The protein resides in the cytoplasm. It localises to the mitochondrion matrix. It carries out the reaction L-lysyl-[protein] + 3 S-adenosyl-L-methionine = N(6),N(6),N(6)-trimethyl-L-lysyl-[protein] + 3 S-adenosyl-L-homocysteine + 3 H(+). In terms of biological role, protein-lysine methyltransferase that selectively trimethylates the flavoprotein ETFB in mitochondria. Thereby, may negatively regulate the function of ETFB in electron transfer from Acyl-CoA dehydrogenases. The polypeptide is Electron transfer flavoprotein beta subunit lysine methyltransferase (Mus musculus (Mouse)).